We begin with the raw amino-acid sequence, 345 residues long: N-acetyl-gamma-glutamyl-phosphate reductase (345 aa).

The active site involves Cys-149.

This sequence belongs to the NAGSA dehydrogenase family. Type 1 subfamily.

It is found in the cytoplasm. It carries out the reaction N-acetyl-L-glutamate 5-semialdehyde + phosphate + NADP(+) = N-acetyl-L-glutamyl 5-phosphate + NADPH + H(+). The protein operates within amino-acid biosynthesis; L-arginine biosynthesis; N(2)-acetyl-L-ornithine from L-glutamate: step 3/4. Catalyzes the NADPH-dependent reduction of N-acetyl-5-glutamyl phosphate to yield N-acetyl-L-glutamate 5-semialdehyde. This is N-acetyl-gamma-glutamyl-phosphate reductase from Bacillus cereus (strain ATCC 10987 / NRS 248).